Here is a 464-residue protein sequence, read N- to C-terminus: A-type ATP synthase subunit B (464 aa).

Belongs to the ATPase alpha/beta chains family. In terms of assembly, has multiple subunits with at least A(3), B(3), C, D, E, F, H, I and proteolipid K(x).

The protein resides in the cell membrane. In terms of biological role, component of the A-type ATP synthase that produces ATP from ADP in the presence of a proton gradient across the membrane. The B chain is a regulatory subunit. The polypeptide is A-type ATP synthase subunit B (Methanococcus aeolicus (strain ATCC BAA-1280 / DSM 17508 / OCM 812 / Nankai-3)).